The chain runs to 162 residues: Protein-export protein SecB (162 aa).

This sequence belongs to the SecB family. Homotetramer, a dimer of dimers. One homotetramer interacts with 1 SecA dimer.

It is found in the cytoplasm. In terms of biological role, one of the proteins required for the normal export of preproteins out of the cell cytoplasm. It is a molecular chaperone that binds to a subset of precursor proteins, maintaining them in a translocation-competent state. It also specifically binds to its receptor SecA. This Hamiltonella defensa subsp. Acyrthosiphon pisum (strain 5AT) protein is Protein-export protein SecB.